We begin with the raw amino-acid sequence, 289 residues long: uncharacterized protein (289 aa).

This is an uncharacterized protein from Archaeoglobus fulgidus (strain ATCC 49558 / DSM 4304 / JCM 9628 / NBRC 100126 / VC-16).